The sequence spans 260 residues: UPF0246 protein Bxeno_A1262 (260 aa).

Belongs to the UPF0246 family.

The sequence is that of UPF0246 protein Bxeno_A1262 from Paraburkholderia xenovorans (strain LB400).